Here is an 826-residue protein sequence, read N- to C-terminus: Dolichyl-diphosphooligosaccharide--protein glycosyltransferase subunit STT3B (826 aa).

The tract at residues 1 to 60 (MAEPSAPESKHKSSLNSSPWSGLMALGNSRHGHHGPGAQCAHKAAGGAAPPKPAPAGLSG) is disordered. A2 carries the N-acetylalanine modification. Residues 2–41 (AEPSAPESKHKSSLNSSPWSGLMALGNSRHGHHGPGAQCA) lie on the Cytoplasmic side of the membrane. Phosphoserine is present on residues S13, S18, and S29. Low complexity predominate over residues 37-49 (GAQCAHKAAGGAA). The chain crosses the membrane as a helical span at residues 42-86 (HKAAGGAAPPKPAPAGLSGGLSQPAGWQSLLSFTILFLAWLAGFS). The Lumenal portion of the chain corresponds to 87-173 (SRLFAVIRFE…VHIRDVCVFL (87 aa)). The DXD motif 1 motif lies at 101–103 (EFD). D103 provides a ligand contact to Mn(2+). The chain crosses the membrane as a helical span at residues 174–192 (APTFSGLTSISTFLLTREL). The Cytoplasmic segment spans residues 193 to 194 (WN). Residues 195-212 (QGAGLLAACFIAIVPGYI) form a helical membrane-spanning segment. Topologically, residues 213-223 (SRSVAGSFDNE) are lumenal. 2 residues coordinate Mn(2+): D221 and E223. Positions 221 to 223 (DNE) match the DXD motif 2 motif. The helical transmembrane segment at 224–243 (GIAIFALQFTYYLWVKSVKT) threads the bilayer. Residues 244 to 245 (GS) are Cytoplasmic-facing. A helical membrane pass occupies residues 246–260 (VFWTMCCCLSYFYMV). At 261 to 265 (SAWGG) the chain is on the lumenal side. The helical transmembrane segment at 266–282 (YVFIINLIPLHVFVLLL) threads the bilayer. The Cytoplasmic segment spans residues 283–287 (MQRYS). A helical membrane pass occupies residues 288–313 (KRVYIAYSTFYIVGLILSMQIPFVGF). The Lumenal segment spans residues 314–321 (QPIRTSEH). A helical transmembrane segment spans residues 322–341 (MAAAGVFALLQAYAFLQYLR). The Cytoplasmic portion of the chain corresponds to 342–350 (DRLTKQEFQ). A helical transmembrane segment spans residues 351–371 (TLFFLGVSLAAGAVFLSVIYL). Over 372-410 (TYTGYIAPWSGRFYSLWDTGYAKIHIPIIASVSEHQPTT) the chain is Lumenal. An SVSE motif motif is present at residues 402-405 (SVSE). The helical transmembrane segment at 411–433 (WVSFFFDLHILVCTFPAGLWFCI) threads the bilayer. At 434-439 (KNINDE) the chain is on the cytoplasmic side. The helical transmembrane segment at 440–456 (RVFVALYAISAVYFAGV) threads the bilayer. Residues 457–460 (MVRL) lie on the Lumenal side of the membrane. A dolichyl diphosphooligosaccharide-binding site is contributed by R459. A helical transmembrane segment spans residues 461 to 482 (MLTLTPVVCMLSAIAFSNVFEH). Topologically, residues 483–526 (YLGDDMKRENPPVEDSSDEDDKRNQGNLYDKAGKVRKHATEQEK) are cytoplasmic. Positions 490–509 (RENPPVEDSSDEDDKRNQGN) are disordered. 2 positions are modified to phosphoserine: S498 and S499. The chain crosses the membrane as a helical span at residues 527–552 (TEEGLGPNIKSIVTMLMLMLLMMFAV). Residues 553–826 (HCTWVTSNAY…KGKKISKKTV (274 aa)) are Lumenal-facing. Positions 604 to 606 (WWD) are interacts with target acceptor peptide in protein substrate. The short motif at 604-608 (WWDYG) is the WWDYG motif element. Y609 contributes to the dolichyl diphosphooligosaccharide binding site. N-linked (GlcNAc...) asparagine glycosylation is found at N616 and N623. N-linked (GlcNAc...) (high mannose) asparagine glycosylation occurs at N627. An N-linked (GlcNAc...) asparagine glycan is attached at N641. Positions 671–678 (DINKFLWM) match the DK motif motif.

Belongs to the STT3 family. In terms of assembly, component of the oligosaccharyltransferase (OST) complex. There are 2 OST complexes, OST-A and OST-B, which contain STT3A or STT3B as catalytic subunit, respectively. OST-A and OST-B contain common core subunits RPN1, RPN2, OST48, OST4, DAD1 and TMEM258, and OST-B contains either MAGT1 or TUSC3 as specific accessory subunit. Requires Mg(2+) as cofactor. Mn(2+) serves as cofactor. As to expression, expressed in heart, brain, placenta, lung, liver, muscle, kidney and pancreas. Expressed in skin fibroblasts (at protein level).

Its subcellular location is the endoplasmic reticulum. The protein resides in the endoplasmic reticulum membrane. It catalyses the reaction a di-trans,poly-cis-dolichyl diphosphooligosaccharide + L-asparaginyl-[protein] = N(4)-(oligosaccharide-(1-&gt;4)-N-acetyl-beta-D-glucosaminyl-(1-&gt;4)-N-acetyl-beta-D-glucosaminyl)-L-asparaginyl-[protein] + a di-trans,poly-cis-dolichyl diphosphate + H(+). It participates in protein modification; protein glycosylation. Its function is as follows. Catalytic subunit of the oligosaccharyl transferase (OST) complex that catalyzes the initial transfer of a defined glycan (Glc(3)Man(9)GlcNAc(2) in eukaryotes) from the lipid carrier dolichol-pyrophosphate to an asparagine residue within an Asn-X-Ser/Thr consensus motif in nascent polypeptide chains, the first step in protein N-glycosylation. N-glycosylation occurs cotranslationally and the complex associates with the Sec61 complex at the channel-forming translocon complex that mediates protein translocation across the endoplasmic reticulum (ER). All subunits are required for a maximal enzyme activity. This subunit contains the active site and the acceptor peptide and donor lipid-linked oligosaccharide (LLO) binding pockets. STT3B is present in a small subset of OST complexes (OST-B) and mediates both cotranslational and post-translational N-glycosylation of target proteins: STT3B-containing complexes are required for efficient post-translational glycosylation and while they are less competent than STT3A-containing complexes for cotranslational glycosylation, they have the ability to mediate glycosylation of some nascent sites that are not accessible for STT3A. STT3B-containing complexes also act post-translationally and mediate modification of skipped glycosylation sites in unfolded proteins. Plays a role in ER-associated degradation (ERAD) pathway that mediates ubiquitin-dependent degradation of misfolded endoplasmic reticulum proteins by mediating N-glycosylation of unfolded proteins, which are then recognized by the ERAD pathway and targeted for degradation. Mediates glycosylation of the disease variant AMYL-TTR 'Asp-38' of TTR at 'Asn-118', leading to its degradation. The polypeptide is Dolichyl-diphosphooligosaccharide--protein glycosyltransferase subunit STT3B (Homo sapiens (Human)).